The sequence spans 366 residues: Chorismate synthase (366 aa).

NADP(+) is bound at residue R47. FMN-binding positions include 124–126 (RSS), G286, 301–305 (KPVAT), and R327.

Belongs to the chorismate synthase family. In terms of assembly, homotetramer. Requires FMNH2 as cofactor.

It catalyses the reaction 5-O-(1-carboxyvinyl)-3-phosphoshikimate = chorismate + phosphate. It functions in the pathway metabolic intermediate biosynthesis; chorismate biosynthesis; chorismate from D-erythrose 4-phosphate and phosphoenolpyruvate: step 7/7. In terms of biological role, catalyzes the anti-1,4-elimination of the C-3 phosphate and the C-6 proR hydrogen from 5-enolpyruvylshikimate-3-phosphate (EPSP) to yield chorismate, which is the branch point compound that serves as the starting substrate for the three terminal pathways of aromatic amino acid biosynthesis. This reaction introduces a second double bond into the aromatic ring system. The sequence is that of Chorismate synthase from Methylacidiphilum infernorum (isolate V4) (Methylokorus infernorum (strain V4)).